The following is a 266-amino-acid chain: uncharacterized protein (266 aa).

It belongs to the chlamydial CPn_0087/CT3_09/TC_0583 family.

This is an uncharacterized protein from Chlamydia muridarum (strain MoPn / Nigg).